We begin with the raw amino-acid sequence, 224 residues long: Steroid receptor RNA activator 1 (224 aa).

Disordered regions lie at residues 1 to 90 (MAEL…EPTS) and 201 to 224 (AANEEKSAATAEKNHTIPGFQQAS). Residues S48, S57, and S75 each carry the phosphoserine modification. The span at 58–76 (PGPPPMGPPPPSSKAPRSP) shows a compositional bias: pro residues. The span at 201–215 (AANEEKSAATAEKNH) shows a compositional bias: basic and acidic residues.

Belongs to the SRA1 family. As to quaternary structure, SRA1 RNA exists in a ribonucleoprotein complex containing NCOA1. The RNA also forms a complex with PUS1 and RARG in the nucleus. Interacts with AR. Highly expressed in liver and skeletal muscle and to a lesser extent in brain. Also expressed in both normal and tumorigenic breast epithelial cell lines. Significantly up-regulated in human tumors of the breast, ovary, and uterus.

The protein resides in the nucleus. It is found in the cytoplasm. Functionally, functional RNA which acts as a transcriptional coactivator that selectively enhances steroid receptor-mediated transactivation ligand-independently through a mechanism involving the modulating N-terminal domain (AF-1) of steroid receptors. Also mediates transcriptional coactivation of steroid receptors ligand-dependently through the steroid-binding domain (AF-2). Enhances cellular proliferation and differentiation and promotes apoptosis in vivo. May play a role in tumorigenesis. The sequence is that of Steroid receptor RNA activator 1 from Homo sapiens (Human).